The primary structure comprises 242 residues: Dehydration-responsive element-binding protein 1J (242 aa).

The span at 20 to 29 shows a compositional bias: low complexity; it reads SSATTAATAT. The segment at 20–44 is disordered; sequence SSATTAATATGPASPKRPAGRTKFQ. The segment at residues 50–109 is a DNA-binding region (AP2/ERF); sequence VFRGVRRRGRAGRWVCEVRVPGSRGDRLWVGTFDTAEEAARAHDAAMLALCGASASLNFA. Residues 143–184 form a disordered region; that stretch reads FQRRGSTAATATATSGDAASTAPPSSSPVLSPNDDNASSAST. The span at 148–184 shows a compositional bias: low complexity; that stretch reads STAATATATSGDAASTAPPSSSPVLSPNDDNASSAST.

This sequence belongs to the AP2/ERF transcription factor family. ERF subfamily.

The protein localises to the nucleus. Transcriptional activator that binds specifically to the DNA sequence 5'-[AG]CCGAC-3'. Binding to the C-repeat/DRE element mediates high salinity- and dehydration-inducible transcription. The chain is Dehydration-responsive element-binding protein 1J (DREB1J) from Oryza sativa subsp. japonica (Rice).